The primary structure comprises 144 residues: MEQTLSIIKPDSVSKAHIGEILSIFEQSGLRIAAMKMMHLSQTEAEGFYFVHRERPFFQELVDFMVSGPVVVLVLEGANAVSRNRELMGATNPAEAASGTIRAKFGESIGVNAVHGSDTLENAAVEIAYFFSKIEVVNASKPLV.

ATP-binding residues include Lys9, Phe57, Arg85, Thr91, Arg102, and Asn112. His115 (pros-phosphohistidine intermediate) is an active-site residue.

The protein belongs to the NDK family. In terms of assembly, homotetramer. Mg(2+) serves as cofactor.

It localises to the cytoplasm. The enzyme catalyses a 2'-deoxyribonucleoside 5'-diphosphate + ATP = a 2'-deoxyribonucleoside 5'-triphosphate + ADP. The catalysed reaction is a ribonucleoside 5'-diphosphate + ATP = a ribonucleoside 5'-triphosphate + ADP. Major role in the synthesis of nucleoside triphosphates other than ATP. The ATP gamma phosphate is transferred to the NDP beta phosphate via a ping-pong mechanism, using a phosphorylated active-site intermediate. This Chlamydia pneumoniae (Chlamydophila pneumoniae) protein is Nucleoside diphosphate kinase.